Here is a 135-residue protein sequence, read N- to C-terminus: Kappa-casein (135 aa).

The O-linked (GalNAc...) threonine glycan is linked to Thr96. Ser114 bears the Phosphoserine; alternate mark. Ser114 carries O-linked (GalNAc...) serine; alternate glycosylation. Residue Thr131 is glycosylated (O-linked (GalNAc...) threonine). The residue at position 132 (Ser132) is a Phosphoserine.

It belongs to the kappa-casein family. In terms of tissue distribution, mammary gland specific. Secreted in milk.

Its subcellular location is the secreted. In terms of biological role, kappa-casein stabilizes micelle formation, preventing casein precipitation in milk. The polypeptide is Kappa-casein (CSN3) (Equus grevyi (Grevy's zebra)).